The following is a 436-amino-acid chain: MNIIVVGLSHKTAPVEVRERVAFSPNLIERPLRELVSLDDISEGVIVSTCNRVEIYATTHDIAGGTARIKRFLADHHRIPLESLEQYLYSYHSEAAIRHVFRVASSLDSMVVGEPQILGQIKTAYGYAAEYRTSGTILNRFLHKAFSVAKRVRTETRIASSAVSVAFAAVELARKILGDLSGKTVMLIGAGEMCELAAKHFLTSGARGLLVANRTFAKGERLAAEFGGEAIPFEELFQELHRADIVLSSTGAPHTIIAPRDVEAVVKRRKFKPMFFIDIAVPRDIDPRVNDLESAYLFTVDDLQEIVEANMAQRNQEASKGEEIVEQEIGQFHCWLSSLESTPTIVALRARFEEIRRAELEKTLCGWKDLSPEAEKRLEIMTLSIMNKLLHTPTAVLKRAGQGGRTDLYTDALRQLFDLQTSRQDDDELELELEEE.

Substrate is bound by residues 49–52 (TCNR), Ser109, 114–116 (EPQ), and Gln120. Cys50 acts as the Nucleophile in catalysis. NADP(+) is bound at residue 189–194 (GAGEMC).

Belongs to the glutamyl-tRNA reductase family. In terms of assembly, homodimer.

The catalysed reaction is (S)-4-amino-5-oxopentanoate + tRNA(Glu) + NADP(+) = L-glutamyl-tRNA(Glu) + NADPH + H(+). The protein operates within porphyrin-containing compound metabolism; protoporphyrin-IX biosynthesis; 5-aminolevulinate from L-glutamyl-tRNA(Glu): step 1/2. Functionally, catalyzes the NADPH-dependent reduction of glutamyl-tRNA(Glu) to glutamate 1-semialdehyde (GSA). The protein is Glutamyl-tRNA reductase of Pelobacter propionicus (strain DSM 2379 / NBRC 103807 / OttBd1).